A 636-amino-acid chain; its full sequence is MVICHSCTTFCILLVIDLVPCRIVGMENVENRVMFSLLDRSPQTNDTGPKPEKFEIAKGKFKVLEENSIGADTVSHLPTTREEHVSAVVPMPNFDPHRLEKALRTKGSIDGTEEALYRSLLDHTVYEKDVRPCIHHSQPTNVTFGFLLNQIVEMDERNQALTTRSWLNINWMDPRLSWNESLWSDIKAIYIPHARIWKPDIILVNNAIREYYASLVSTDVMVTSDGNVTWLFSALFRSSCPIRVRYYPFDDQQCDLKFASWSHDITEINLGLNTDKGDLSSYMNNSEFDLVDMTAVREVVRFPSDTNSDWPTIVIRIHMHRRPLFYVFNHIVPCVLISSMAVLGFLMPPETGEKINMIITTLLSMGVYLQSITESIPPTSEGVPLIGMYYVSSLLMVCLATCVNVITLNMHRNGAANQGRHVPAWMQKWILGYLATFMRMSIREPDSIALLKASQSKKSTIRRSSILRDLKRVKNMSNVRAKSKEQNANRECECMDPLVHIYAESIMTSLVSDPKPMNGSTIREDFASESTFLGRVVSDGIMPRISASSNSVLTEFETRFRRILKRVYRSLQQHEIREEILDERSRIQWQWQQLASVVDRLLLCLFCTATLFTIICLLIVPVVYRDNDVLSILNFF.

Positions 1-25 (MVICHSCTTFCILLVIDLVPCRIVG) are cleaved as a signal peptide. The Extracellular portion of the chain corresponds to 26–326 (MENVENRVMF…IHMHRRPLFY (301 aa)). N-linked (GlcNAc...) asparagine glycans are attached at residues Asn45, Asn141, Asn179, and Asn227. A disulfide bridge connects residues Cys240 and Cys254. An N-linked (GlcNAc...) asparagine glycan is attached at Asn284. Helical transmembrane passes span 327-347 (VFNHIVPCVLISSMAVLGFLM), 357-377 (MIITTLLSMGVYLQSITESIP), and 383-403 (VPLIGMYYVSSLLMVCLATCV). Over 404-602 (NVITLNMHRN…QLASVVDRLL (199 aa)) the chain is Cytoplasmic. A helical membrane pass occupies residues 603-623 (LCLFCTATLFTIICLLIVPVV).

The protein belongs to the ligand-gated ion channel (TC 1.A.9) family.

It is found in the postsynaptic cell membrane. Its subcellular location is the cell membrane. Acetylcholine receptor. In Caenorhabditis briggsae, this protein is Ligand-gated ion channel 4.